A 718-amino-acid chain; its full sequence is Polyribonucleotide nucleotidyltransferase (718 aa).

Mg(2+)-binding residues include Asp-487 and Asp-493. Positions 554–613 (PRIETFKIPTDKIREVIGTGGKVIREIVEKTGAKVNIEDDGTVKVASSDGESIKAAIKWI) constitute a KH domain. Residues 623–691 (GEIYEGTVVK…DRGKTRLSMR (69 aa)) form the S1 motif domain. Residues 694–718 (DQETGEDLEAKQKAEGEAPAQATGE) form a disordered region.

It belongs to the polyribonucleotide nucleotidyltransferase family. Mg(2+) is required as a cofactor.

Its subcellular location is the cytoplasm. The catalysed reaction is RNA(n+1) + phosphate = RNA(n) + a ribonucleoside 5'-diphosphate. Involved in mRNA degradation. Catalyzes the phosphorolysis of single-stranded polyribonucleotides processively in the 3'- to 5'-direction. The protein is Polyribonucleotide nucleotidyltransferase of Rhodopseudomonas palustris (strain HaA2).